Here is a 1773-residue protein sequence, read N- to C-terminus: Plexin-2 (1773 aa).

The first 19 residues, 1–19, serve as a signal peptide directing secretion; that stretch reads MLFIESAFLVLTSLSAAEA. The 417-residue stretch at 20 to 436 folds into the Sema domain; that stretch reads ATPFEGGVKQ…MPYGIVMEEL (417 aa). Over 20 to 1130 the chain is Extracellular; sequence ATPFEGGVKQ…SDHALPSRLS (1111 aa). A glycan (N-linked (GlcNAc...) asparagine) is linked at Asn65. Disulfide bonds link Cys83-Cys90, Cys117-Cys125, Cys239-Cys341, Cys255-Cys292, Cys310-Cys328, Cys439-Cys456, Cys445-Cys479, Cys448-Cys465, and Cys459-Cys471. The N-linked (GlcNAc...) asparagine glycan is linked to Asn241. Positions 438–480 constitute a PSI 1 domain; sequence TCAHHESCTDCQVSVDPLCQWCHPTQSCTTSSRCSGPLTTQCP. Residue Asn494 is glycosylated (N-linked (GlcNAc...) asparagine). Cysteines 516 and 538 form a disulfide. An N-linked (GlcNAc...) asparagine glycan is attached at Asn566. One can recognise a PSI 2 domain in the interval 571–608; the sequence is DCAGYSTCSTCMSSEFGCQWCSHKCSSSCGSASAKACV. Asn670 and Asn693 each carry an N-linked (GlcNAc...) asparagine glycan. Residues 698–739 form the PSI 3 domain; sequence SCSNLAADCSSCLALSPSLSCGWCNRKCSHECHESKATAVCD. 3 IPT/TIG domains span residues 741 to 829, 831 to 916, and 919 to 1006; these read PKID…FSFV, VSIF…FEYR, and PSVN…FLMD. N-linked (GlcNAc...) asparagine glycosylation is found at Asn855, Asn877, Asn975, and Asn1007. The helical transmembrane segment at 1131-1151 threads the bilayer; sequence FLILGLLLFTVITLIVMCLIF. Residues 1150 to 1188 are a coiled coil; it reads IFKRRRQEREKEYRKIQLQMENLENNVRKECKQAFAELQ. The Cytoplasmic segment spans residues 1152-1764; it reads KRRRQEREKE…LHVCLETDNH (613 aa).

It belongs to the plexin family. In terms of assembly, interacts with mab-20.

It localises to the cell membrane. Functionally, involved as a receptor for mab-20/sema-2a in the formation or stabilization of cell-cell contacts at several stages of epithelial morphogenesis. In early embryonic development, required for proper ventral closure of the epidermis. During male tail morphogenesis, involved in precursor cell sorting and in the formation of distinct sensory rays. Involved in axon guidance of SDQL neurons during neurogenesis. The protein is Plexin-2 (plx-2) of Caenorhabditis briggsae.